We begin with the raw amino-acid sequence, 207 residues long: Outer-membrane lipoprotein LolB (207 aa).

A signal peptide spans 1–21; it reads MPTNTVRCLRLLPLASVLLAA. Cys22 is lipidated: N-palmitoyl cysteine. The S-diacylglycerol cysteine moiety is linked to residue Cys22.

This sequence belongs to the LolB family. Monomer.

The protein resides in the cell outer membrane. In terms of biological role, plays a critical role in the incorporation of lipoproteins in the outer membrane after they are released by the LolA protein. This is Outer-membrane lipoprotein LolB from Pectobacterium carotovorum subsp. carotovorum (strain PC1).